Consider the following 182-residue polypeptide: Protein Syd (182 aa).

The protein belongs to the Syd family.

It localises to the cell inner membrane. Interacts with the SecY protein in vivo. May bind preferentially to an uncomplexed state of SecY, thus functioning either as a chelating agent for excess SecY in the cell or as a regulatory factor that negatively controls the translocase function. This is Protein Syd from Aeromonas hydrophila subsp. hydrophila (strain ATCC 7966 / DSM 30187 / BCRC 13018 / CCUG 14551 / JCM 1027 / KCTC 2358 / NCIMB 9240 / NCTC 8049).